Consider the following 346-residue polypeptide: Holliday junction branch migration complex subunit RuvB (346 aa).

The tract at residues 1–182 is large ATPase domain (RuvB-L); the sequence is MSERLVTSNE…LGVLCSMEYY (182 aa). ATP contacts are provided by residues L21, R22, G63, K66, T67, T68, 129 to 131, R172, Y182, and R219; that span reads EDY. Position 67 (T67) interacts with Mg(2+). Residues 183-253 form a small ATPAse domain (RuvB-S) region; sequence TDEQLKEIII…AAKKSLEILE (71 aa). The tract at residues 256–346 is head domain (RuvB-H); the sequence is GEGFDRIDNK…DSKQCTLFEK (91 aa). DNA is bound by residues R311 and R316.

The protein belongs to the RuvB family. In terms of assembly, homohexamer. Forms an RuvA(8)-RuvB(12)-Holliday junction (HJ) complex. HJ DNA is sandwiched between 2 RuvA tetramers; dsDNA enters through RuvA and exits via RuvB. An RuvB hexamer assembles on each DNA strand where it exits the tetramer. Each RuvB hexamer is contacted by two RuvA subunits (via domain III) on 2 adjacent RuvB subunits; this complex drives branch migration. In the full resolvosome a probable DNA-RuvA(4)-RuvB(12)-RuvC(2) complex forms which resolves the HJ.

Its subcellular location is the cytoplasm. It carries out the reaction ATP + H2O = ADP + phosphate + H(+). Functionally, the RuvA-RuvB-RuvC complex processes Holliday junction (HJ) DNA during genetic recombination and DNA repair, while the RuvA-RuvB complex plays an important role in the rescue of blocked DNA replication forks via replication fork reversal (RFR). RuvA specifically binds to HJ cruciform DNA, conferring on it an open structure. The RuvB hexamer acts as an ATP-dependent pump, pulling dsDNA into and through the RuvAB complex. RuvB forms 2 homohexamers on either side of HJ DNA bound by 1 or 2 RuvA tetramers; 4 subunits per hexamer contact DNA at a time. Coordinated motions by a converter formed by DNA-disengaged RuvB subunits stimulates ATP hydrolysis and nucleotide exchange. Immobilization of the converter enables RuvB to convert the ATP-contained energy into a lever motion, pulling 2 nucleotides of DNA out of the RuvA tetramer per ATP hydrolyzed, thus driving DNA branch migration. The RuvB motors rotate together with the DNA substrate, which together with the progressing nucleotide cycle form the mechanistic basis for DNA recombination by continuous HJ branch migration. Branch migration allows RuvC to scan DNA until it finds its consensus sequence, where it cleaves and resolves cruciform DNA. This chain is Holliday junction branch migration complex subunit RuvB, found in Clostridium perfringens (strain 13 / Type A).